Consider the following 193-residue polypeptide: Serine recombinase gin (193 aa).

A Resolvase/invertase-type recombinase catalytic domain is found at 1-134 (MLIGYVRVST…AGLAAARNKG (134 aa)). Serine 9 functions as the O-(5'-phospho-DNA)-serine intermediate in the catalytic mechanism. A DNA-binding region (H-T-H motif) is located at residues 138–183 (GRPPKLTKAEWEQAGRLLAQGIPRKQVALIYDVALSTLYKKHPAKR).

Belongs to the site-specific recombinase resolvase family. In terms of assembly, homodimer. During inversion, two dimers associate to form a homotetramer.

The protein resides in the host cytoplasm. Performs inversion of a viral 3 kp segment (G-segment) that encodes two alternate pairs of tail fiber proteins thereby modifying the host specificity of the virus. Binds as a dimer to the viral gix sites which are 34-bp palindromic sequences that flank the invertible G-segment. Catalyzes site-specific recombination in the presence of the host factor Fis. Gin dimers bound to each of the gix sites and host factor Fis bound to the enhancer come together to form the synaptic complex. Each Gin monomer introduces a nick and becomes covalently attached to the 5'-phosphate of the DNA, resulting in double-stranded staggered breaks at both recombination sites. A 180 degrees rotation of one of the two Gin dimers followed by religation of the DNA leads to the inversion of the G-segment (G+ or G- orientation). The polypeptide is Serine recombinase gin (gin) (Escherichia phage Mu (Bacteriophage Mu)).